Consider the following 401-residue polypeptide: MTTQFSVADIELSLSRYPANQVSNLQAWDAADEHLIKHLKEIEQKADNTAVINDSFGALCAALTAQAADWPIWVETDAKTSQLGTLQNFNANRLSDSNLTWLNSRELPPQGINLVLMKLPKNLNYFIHQLQRLSQSLAPNTPVYIGAKAKSINKALLETIAKHLGPASASLAWKKTRVITCIADGKPRALPSEVSWAVKEFNLSISNLSNVFAANKLDIGARIMLDNLPEGHFDTIVDLGCGNGILGLRAKQCYPNAEVHFVDDSEMAITSARQNWQANKLDNPEQAKPQGHFHWDDCLTHLGDEVKPDLVLCNPPFHQGEAITDHIAWQMFLDAFHQLRPGGMLQVVGNRHLGYHVKLKRIFKNCETAASNGKFVILRAIKSAKEPVKPAKDVNEPDHQS.

The protein belongs to the methyltransferase superfamily. RlmG family.

It is found in the cytoplasm. It carries out the reaction guanosine(1835) in 23S rRNA + S-adenosyl-L-methionine = N(2)-methylguanosine(1835) in 23S rRNA + S-adenosyl-L-homocysteine + H(+). Functionally, specifically methylates the guanine in position 1835 (m2G1835) of 23S rRNA. This chain is Ribosomal RNA large subunit methyltransferase G, found in Shewanella loihica (strain ATCC BAA-1088 / PV-4).